We begin with the raw amino-acid sequence, 512 residues long: ATP synthase subunit alpha (512 aa).

ATP is bound at residue 169 to 176; it reads GDRQTGKT.

Belongs to the ATPase alpha/beta chains family. In terms of assembly, F-type ATPases have 2 components, CF(1) - the catalytic core - and CF(0) - the membrane proton channel. CF(1) has five subunits: alpha(3), beta(3), gamma(1), delta(1), epsilon(1). CF(0) has three main subunits: a(1), b(2) and c(9-12). The alpha and beta chains form an alternating ring which encloses part of the gamma chain. CF(1) is attached to CF(0) by a central stalk formed by the gamma and epsilon chains, while a peripheral stalk is formed by the delta and b chains.

The protein localises to the cell inner membrane. It catalyses the reaction ATP + H2O + 4 H(+)(in) = ADP + phosphate + 5 H(+)(out). In terms of biological role, produces ATP from ADP in the presence of a proton gradient across the membrane. The alpha chain is a regulatory subunit. This is ATP synthase subunit alpha from Rickettsia canadensis (strain McKiel).